The chain runs to 303 residues: BAG family molecular chaperone regulator 3 (303 aa).

Over residues 1 to 11 the composition is skewed to polar residues; sequence MMKMNTGTSPS. The interval 1–27 is disordered; it reads MMKMNTGTSPSVIGGGTSGNEWESRPG. In terms of domain architecture, Ubiquitin-like spans 45–119; sequence FRVRVKYGSV…LVVKEDPISQ (75 aa). Residues 138–216 enclose the BAG domain; sequence SISDISFEVD…KYVEALDLLK (79 aa). Positions 249–268 are disordered; sequence VEEEEEEPRNSNASSSSGTP. Residues 258–267 show a composition bias toward polar residues; it reads NSNASSSSGT. Phosphoserine is present on Ser263.

As to quaternary structure, binds to the ATPase domain of HSP70/HSC70 chaperones. Interacts with HSP70-1.

Functionally, co-chaperone that regulates diverse cellular pathways, such as programmed cell death and stress responses. In Arabidopsis thaliana (Mouse-ear cress), this protein is BAG family molecular chaperone regulator 3 (BAG3).